Here is a 316-residue protein sequence, read N- to C-terminus: Transaldolase (316 aa).

The active-site Schiff-base intermediate with substrate is K126.

It belongs to the transaldolase family. Type 1 subfamily. Homodimer.

The protein localises to the cytoplasm. The enzyme catalyses D-sedoheptulose 7-phosphate + D-glyceraldehyde 3-phosphate = D-erythrose 4-phosphate + beta-D-fructose 6-phosphate. Its pathway is carbohydrate degradation; pentose phosphate pathway; D-glyceraldehyde 3-phosphate and beta-D-fructose 6-phosphate from D-ribose 5-phosphate and D-xylulose 5-phosphate (non-oxidative stage): step 2/3. Its function is as follows. Transaldolase is important for the balance of metabolites in the pentose-phosphate pathway. The polypeptide is Transaldolase (Methylibium petroleiphilum (strain ATCC BAA-1232 / LMG 22953 / PM1)).